Reading from the N-terminus, the 391-residue chain is Probable sugar efflux transporter (391 aa).

12 helical membrane-spanning segments follow: residues 16–36 (VFVFSLSAFIFNTTEFVPVAL), 51–71 (VGLMITAYAWVVSLGSLPLML), 82–102 (LLFLFALFILSHILSALAWNF), 110–130 (MGIAFTHSIFWSITASLVIRV), 138–158 (QALGLLALGSSLAMILGLPLG), 170–190 (TFGVIGGVATLIALLMWKLLP), 210–230 (PLLMGIYLLVIMVISGHFTTY), 247–267 (ITTLMLFVFGLAGVAGSFLFS), 277–297 (FIAFAMVLVICPQLLLFVFKN), 300–320 (WVIFLQIFLWGIGITSLTIAL), 338–358 (IFSGSYNVGIGSGALFGSIVI), and 361–381 (LGLEYIGFVGGALGLLALFWL).

This sequence belongs to the major facilitator superfamily. SotB (TC 2.A.1.2) family.

The protein resides in the cell inner membrane. Its function is as follows. Involved in the efflux of sugars. The physiological role may be the reduction of the intracellular concentration of toxic sugars or sugar metabolites. The polypeptide is Probable sugar efflux transporter (Helicobacter pylori (strain HPAG1)).